The following is a 490-amino-acid chain: ATP synthase subunit alpha 1 (490 aa).

This sequence belongs to the ATPase alpha/beta chains family. As to quaternary structure, F-type ATPases have 2 components, CF(1) - the catalytic core - and CF(0) - the membrane proton channel. CF(1) has five subunits: alpha(3), beta(3), gamma(1), delta(1), epsilon(1). CF(0) has three main subunits: a(1), b(2) and c(9-12). The alpha and beta chains form an alternating ring which encloses part of the gamma chain. CF(1) is attached to CF(0) by a central stalk formed by the gamma and epsilon chains, while a peripheral stalk is formed by the delta and b chains.

It localises to the cell inner membrane. The catalysed reaction is ATP + H2O + 4 H(+)(in) = ADP + phosphate + 5 H(+)(out). Functionally, produces ATP from ADP in the presence of a proton gradient across the membrane. The alpha chain is a regulatory subunit. The polypeptide is ATP synthase subunit alpha 1 (Legionella pneumophila (strain Paris)).